The following is a 502-amino-acid chain: MTLLHCWLLLVGHLASTAYADFITKDFKSLPPPAYDTNATQALVPYNAALEERNGPSSSTALLQYIDHKPGLMKKLLAGLSIRFAPPTMKVISTPTDMLRIDKIKNNIIKSSQWKRWARSLLEQNSMQNSHVIITKKMMDDLKPTNFFLVLLEASKDKNTKAVAKILEETQFARWCTIEHESISPMEFYDVLQLNLNEPIAYMERLPVLLRYWKYYKSVHSPMSSVATPKDIIDKQTVNRFGPYWKHTGEIAELLRLDFDSDSFFNHPARNVWLDLMKTYLDDTKTAEPLMIKTFQLLGNAAAKNLQNNVYSPIHFAERWIQANLQPIDVVTILGLDIHDSNLATNSAFSFLKVFIEKFLVNHPEADTTVVKIFSRLGSDESEKALALRKSFVSFFLRTPKFTPKTVMSIFDLTISADYVEKNPVWAIWMEYVNVYLVKNKVCPEGPLADTLEFLGSTAAADGVVRKKSIELLYSSWSGKTSQDTRIKQFLTAAARLNQLEL.

The first 20 residues, 1–20 (MTLLHCWLLLVGHLASTAYA), serve as a signal peptide directing secretion. An N-linked (GlcNAc...) asparagine glycan is attached at asparagine 38. Residues 50–53 (LEER) carry the dEER motif.

This sequence belongs to the RxLR effector family.

The protein localises to the secreted. It localises to the host cell membrane. In terms of biological role, secreted effector that triggers a robust hypersensitive response (HR) in Lactuca serriola LS102. The response to BLN06 was visible as chlorosis but not as strong necrosis. The protein is RxLR effector protein BLN06 of Bremia lactucae (Lettuce downy mildew).